We begin with the raw amino-acid sequence, 685 residues long: Galactocerebrosidase (685 aa).

An N-terminal signal peptide occupies residues 1–42 (MAEWLLSASWQRRAKAMTAAAGSAGRAAVPLLLCALLAPGGA). Residue Thr-109 coordinates substrate. Asn-143 is a glycosylation site (N-linked (GlcNAc...) asparagine). Residues Trp-151 and Asn-197 each contribute to the substrate site. Glu-198 functions as the Proton donor/acceptor in the catalytic mechanism. The Nucleophile role is filled by Glu-274. Cysteines 287 and 394 form a disulfide. A glycan (N-linked (GlcNAc...) asparagine) is linked at Asn-379. Arg-396 serves as a coordination point for substrate. Asn-403, Asn-556, Asn-559, and Asn-602 each carry an N-linked (GlcNAc...) asparagine glycan.

It belongs to the glycosyl hydrolase 59 family. As to expression, detected in urine. Detected in testis, brain and placenta (at protein level). Detected in kidney and liver.

It localises to the lysosome. It carries out the reaction a beta-D-galactosyl-(1&lt;-&gt;1')-N-acylsphing-4-enine + H2O = an N-acylsphing-4-enine + D-galactose. The enzyme catalyses beta-D-galactosyl-(1&lt;-&gt;1)-sphing-4-enine + H2O = sphing-4-enine + D-galactose. It catalyses the reaction a D-galactosylceramide + H2O = an N-acyl-sphingoid base + D-galactose. Hydrolyzes the galactose ester bonds of glycolipids such as galactosylceramide and galactosylsphingosine. Enzyme with very low activity responsible for the lysosomal catabolism of galactosylceramide, a major lipid in myelin, kidney and epithelial cells of small intestine and colon. This is Galactocerebrosidase from Homo sapiens (Human).